A 61-amino-acid polypeptide reads, in one-letter code: Small ribosomal subunit protein uS14 (61 aa).

The Zn(2+) site is built by C24, C27, C40, and C43.

It belongs to the universal ribosomal protein uS14 family. Zinc-binding uS14 subfamily. As to quaternary structure, part of the 30S ribosomal subunit. Contacts proteins S3 and S10. Zn(2+) is required as a cofactor.

In terms of biological role, binds 16S rRNA, required for the assembly of 30S particles and may also be responsible for determining the conformation of the 16S rRNA at the A site. The polypeptide is Small ribosomal subunit protein uS14 (Streptococcus pyogenes serotype M49 (strain NZ131)).